Consider the following 344-residue polypeptide: tRNA(Ile)-lysidine synthase (344 aa).

43-48 is a binding site for ATP; the sequence is SGGADS.

It belongs to the tRNA(Ile)-lysidine synthase family.

It localises to the cytoplasm. The enzyme catalyses cytidine(34) in tRNA(Ile2) + L-lysine + ATP = lysidine(34) in tRNA(Ile2) + AMP + diphosphate + H(+). Functionally, ligates lysine onto the cytidine present at position 34 of the AUA codon-specific tRNA(Ile) that contains the anticodon CAU, in an ATP-dependent manner. Cytidine is converted to lysidine, thus changing the amino acid specificity of the tRNA from methionine to isoleucine. This chain is tRNA(Ile)-lysidine synthase, found in Bordetella bronchiseptica (strain ATCC BAA-588 / NCTC 13252 / RB50) (Alcaligenes bronchisepticus).